Here is a 570-residue protein sequence, read N- to C-terminus: High-affinity hexose transporter HXT7 (570 aa).

Topologically, residues 1 to 60 (MSQDAAIAEQTPVEHLSAVDSASHSVLSTPSNKAERDEIKAYGEGEEHEPVVEIPKRPAS) are cytoplasmic. Residues 61 to 81 (AYVTVSIMCIMIAFGGFVFGW) form a helical membrane-spanning segment. Over 82–116 (DTGTISGFINQTDFIRRFGMKHKDGTNYLSKVRTG) the chain is Extracellular. Residue N91 is glycosylated (N-linked (GlcNAc...) asparagine). A helical transmembrane segment spans residues 117–137 (LIVSIFNIGCAIGGIILSKLG). Topologically, residues 138–143 (DMYGRK) are cytoplasmic. Residues 144 to 164 (VGLIVVVVIYIIGIIIQIASI) form a helical membrane-spanning segment. Residues 165 to 174 (NKWYQYFIGR) are Extracellular-facing. A helical transmembrane segment spans residues 175 to 195 (IISGLGVGGIAVLSPMLISEV). Residues 196-201 (SPKHLR) are Cytoplasmic-facing. The helical transmembrane segment at 202-222 (GTLVSCYQLMITAGIFLGYCT) threads the bilayer. Residues 223–236 (NFGTKNYSNSVQWR) lie on the Extracellular side of the membrane. Residue N228 is glycosylated (N-linked (GlcNAc...) asparagine). Residues 237–257 (VPLGLCFAWALFMIGGMTFVP) traverse the membrane as a helical segment. Topologically, residues 258 to 340 (ESPRYLAEVG…IQSLQQLTGD (83 aa)) are cytoplasmic. A helical transmembrane segment spans residues 341-357 (NYFFYYGTTIFKAVGLS). The Extracellular portion of the chain corresponds to 358–363 (DSFETS). The helical transmembrane segment at 364-381 (IVLGIVNFASTFVGIYVV) threads the bilayer. Residues 382–388 (ERYGRRT) lie on the Cytoplasmic side of the membrane. A helical membrane pass occupies residues 389–409 (CLLWGAASMTACMVVYASVGV). The Extracellular portion of the chain corresponds to 410 to 431 (TRLWPNGQDQPSSKGAGNCMIV). A helical transmembrane segment spans residues 432 to 452 (FACFYIFCFATTWAPIPYVVV). The Cytoplasmic portion of the chain corresponds to 453-469 (SETFPLRVKSKAMSIAT). A helical transmembrane segment spans residues 470-490 (AANWLWGFLIGFFTPFITGAI). A topological domain (extracellular) is located at residue N491. A helical membrane pass occupies residues 492-512 (FYYGYVFMGCLVFMFFYVLLV). The Cytoplasmic segment spans residues 513 to 570 (VPETKGLTLEEVNTMWEEGVLPWKSASWVPPSRRGANYDAEEMTHDDKPLYKRMFSTK). Position 556 is a phosphothreonine (T556). K560 is covalently cross-linked (Glycyl lysine isopeptide (Lys-Gly) (interchain with G-Cter in ubiquitin)).

Belongs to the major facilitator superfamily. Sugar transporter (TC 2.A.1.1) family.

The protein localises to the membrane. Functionally, high-affinity glucose transporter. This Saccharomyces cerevisiae (strain ATCC 204508 / S288c) (Baker's yeast) protein is High-affinity hexose transporter HXT7 (HXT7).